The chain runs to 310 residues: 4-diphosphocytidyl-2-C-methyl-D-erythritol kinase (310 aa).

Residue Lys12 is part of the active site. Pro97–Ser107 contributes to the ATP binding site. Residue Asp139 is part of the active site.

Belongs to the GHMP kinase family. IspE subfamily.

The catalysed reaction is 4-CDP-2-C-methyl-D-erythritol + ATP = 4-CDP-2-C-methyl-D-erythritol 2-phosphate + ADP + H(+). It functions in the pathway isoprenoid biosynthesis; isopentenyl diphosphate biosynthesis via DXP pathway; isopentenyl diphosphate from 1-deoxy-D-xylulose 5-phosphate: step 3/6. Catalyzes the phosphorylation of the position 2 hydroxy group of 4-diphosphocytidyl-2C-methyl-D-erythritol. This chain is 4-diphosphocytidyl-2-C-methyl-D-erythritol kinase, found in Synechococcus sp. (strain CC9311).